The primary structure comprises 146 residues: Large ribosomal subunit protein uL13 (146 aa).

The protein belongs to the universal ribosomal protein uL13 family. Part of the 50S ribosomal subunit.

This protein is one of the early assembly proteins of the 50S ribosomal subunit, although it is not seen to bind rRNA by itself. It is important during the early stages of 50S assembly. The polypeptide is Large ribosomal subunit protein uL13 (Borreliella burgdorferi (strain ATCC 35210 / DSM 4680 / CIP 102532 / B31) (Borrelia burgdorferi)).